Consider the following 145-residue polypeptide: Protein MMF1, mitochondrial (145 aa).

Residues 1-17 (MFLRNSVLRTAPVLRRG) constitute a mitochondrion transit peptide.

This sequence belongs to the RutC family.

Its subcellular location is the mitochondrion matrix. Plays a role in the maintenance of mitochondrial DNA. In Saccharomyces cerevisiae (strain ATCC 204508 / S288c) (Baker's yeast), this protein is Protein MMF1, mitochondrial (MMF1).